Reading from the N-terminus, the 103-residue chain is Large ribosomal subunit protein uL24 (103 aa).

It belongs to the universal ribosomal protein uL24 family. As to quaternary structure, part of the 50S ribosomal subunit.

In terms of biological role, one of two assembly initiator proteins, it binds directly to the 5'-end of the 23S rRNA, where it nucleates assembly of the 50S subunit. One of the proteins that surrounds the polypeptide exit tunnel on the outside of the subunit. This chain is Large ribosomal subunit protein uL24, found in Lachnospira eligens (strain ATCC 27750 / DSM 3376 / VPI C15-48 / C15-B4) (Eubacterium eligens).